The following is a 258-amino-acid chain: NAD-capped RNA hydrolase NudC (258 aa).

Residue Arg69 participates in substrate binding. Zn(2+) contacts are provided by Cys98 and Cys101. Position 111 (Glu111) interacts with substrate. Residues Cys116 and Cys119 each contribute to the Zn(2+) site. Tyr124 serves as a coordination point for substrate. One can recognise a Nudix hydrolase domain in the interval 125–248; it reads PQIAPCIIVA…TVARRLIEDT (124 aa). 3 residues coordinate a divalent metal cation: Ala158, Glu174, and Glu178. Residues 159–180 carry the Nudix box motif; that stretch reads GFVEVGETLEQTVAREVMEESG. Position 192 to 199 (192 to 199) interacts with substrate; sequence QPWPFPMS. Residue Glu219 coordinates a divalent metal cation. Residue Ala241 coordinates substrate.

This sequence belongs to the Nudix hydrolase family. NudC subfamily. In terms of assembly, homodimer. Requires Mg(2+) as cofactor. The cofactor is Mn(2+). Zn(2+) is required as a cofactor.

The catalysed reaction is a 5'-end NAD(+)-phospho-ribonucleoside in mRNA + H2O = a 5'-end phospho-adenosine-phospho-ribonucleoside in mRNA + beta-nicotinamide D-ribonucleotide + 2 H(+). It carries out the reaction NAD(+) + H2O = beta-nicotinamide D-ribonucleotide + AMP + 2 H(+). The enzyme catalyses NADH + H2O = reduced beta-nicotinamide D-ribonucleotide + AMP + 2 H(+). In terms of biological role, mRNA decapping enzyme that specifically removes the nicotinamide adenine dinucleotide (NAD) cap from a subset of mRNAs by hydrolyzing the diphosphate linkage to produce nicotinamide mononucleotide (NMN) and 5' monophosphate mRNA. The NAD-cap is present at the 5'-end of some mRNAs and stabilizes RNA against 5'-processing. Has preference for mRNAs with a 5'-end purine. Catalyzes the hydrolysis of a broad range of dinucleotide pyrophosphates. This Enterobacter sp. (strain 638) protein is NAD-capped RNA hydrolase NudC.